The primary structure comprises 188 residues: Photosystem I assembly protein Ycf4 (188 aa).

2 consecutive transmembrane segments (helical) span residues 26–46 (YFWA…GLSS) and 70–90 (LLFY…SLLW).

It belongs to the Ycf4 family.

It is found in the cellular thylakoid membrane. Functionally, seems to be required for the assembly of the photosystem I complex. This chain is Photosystem I assembly protein Ycf4, found in Microcystis aeruginosa (strain NIES-843 / IAM M-2473).